Here is a 369-residue protein sequence, read N- to C-terminus: UDP-N-acetylglucosamine--N-acetylmuramyl-(pentapeptide) pyrophosphoryl-undecaprenol N-acetylglucosamine transferase (369 aa).

Residues 15 to 17, asparagine 126, arginine 169, serine 197, and glutamine 299 contribute to the UDP-N-acetyl-alpha-D-glucosamine site; that span reads TGG.

It belongs to the glycosyltransferase 28 family. MurG subfamily.

Its subcellular location is the cell inner membrane. It carries out the reaction di-trans,octa-cis-undecaprenyl diphospho-N-acetyl-alpha-D-muramoyl-L-alanyl-D-glutamyl-meso-2,6-diaminopimeloyl-D-alanyl-D-alanine + UDP-N-acetyl-alpha-D-glucosamine = di-trans,octa-cis-undecaprenyl diphospho-[N-acetyl-alpha-D-glucosaminyl-(1-&gt;4)]-N-acetyl-alpha-D-muramoyl-L-alanyl-D-glutamyl-meso-2,6-diaminopimeloyl-D-alanyl-D-alanine + UDP + H(+). It participates in cell wall biogenesis; peptidoglycan biosynthesis. Its function is as follows. Cell wall formation. Catalyzes the transfer of a GlcNAc subunit on undecaprenyl-pyrophosphoryl-MurNAc-pentapeptide (lipid intermediate I) to form undecaprenyl-pyrophosphoryl-MurNAc-(pentapeptide)GlcNAc (lipid intermediate II). The polypeptide is UDP-N-acetylglucosamine--N-acetylmuramyl-(pentapeptide) pyrophosphoryl-undecaprenol N-acetylglucosamine transferase (Methylorubrum extorquens (strain PA1) (Methylobacterium extorquens)).